The primary structure comprises 248 residues: 5'-nucleotidase SurE (248 aa).

Asp-8, Asp-9, Ser-39, and Asn-91 together coordinate a divalent metal cation.

This sequence belongs to the SurE nucleotidase family. A divalent metal cation serves as cofactor.

The protein localises to the cytoplasm. It catalyses the reaction a ribonucleoside 5'-phosphate + H2O = a ribonucleoside + phosphate. Its function is as follows. Nucleotidase that shows phosphatase activity on nucleoside 5'-monophosphates. This Marinomonas sp. (strain MWYL1) protein is 5'-nucleotidase SurE.